A 276-amino-acid polypeptide reads, in one-letter code: Light-independent protochlorophyllide reductase iron-sulfur ATP-binding protein (276 aa).

Residues Gly12 to Thr17 and Lys41 contribute to the ATP site. Ser16 serves as a coordination point for Mg(2+). [4Fe-4S] cluster-binding residues include Cys97 and Cys131. Asn182 to Arg183 is an ATP binding site.

This sequence belongs to the NifH/BchL/ChlL family. In terms of assembly, homodimer. Protochlorophyllide reductase is composed of three subunits; BchL, BchN and BchB. [4Fe-4S] cluster is required as a cofactor.

It catalyses the reaction chlorophyllide a + oxidized 2[4Fe-4S]-[ferredoxin] + 2 ADP + 2 phosphate = protochlorophyllide a + reduced 2[4Fe-4S]-[ferredoxin] + 2 ATP + 2 H2O. It functions in the pathway porphyrin-containing compound metabolism; bacteriochlorophyll biosynthesis (light-independent). In terms of biological role, component of the dark-operative protochlorophyllide reductase (DPOR) that uses Mg-ATP and reduced ferredoxin to reduce ring D of protochlorophyllide (Pchlide) to form chlorophyllide a (Chlide). This reaction is light-independent. The L component serves as a unique electron donor to the NB-component of the complex, and binds Mg-ATP. The polypeptide is Light-independent protochlorophyllide reductase iron-sulfur ATP-binding protein (Chlorobium chlorochromatii (strain CaD3)).